The sequence spans 299 residues: MQLSLPELSYTHKSITEFEPAIRNDGRSIDQLRPLSGQVDVLPGTNGSARVKWASSVEIVIGVKAEVGDATPEGGKYVASVEISPSVSIQNRETDEIPSFLTSALQDLLNALAVDYLKFTPSKAWIIHVDAVVILSSSPYENILSALSLAAYLALQTTRLPKISTPNVTDITIGSTKYEPSEEYDVDSEWENALPLQGLELMSVIILVSSIDQVIIVDPTIEESSVAQVTYAIGVQASGAISYTRVVGTGGGYASTGRAITVERYIELLETASTVGTKLLNASSDILSFKGLGFFDILP.

The protein belongs to the RNase PH family. As to quaternary structure, component of the RNA exosome complex. Specifically part of the catalytically inactive RNA exosome core complex (Exo-9) which may associate with the catalytic subunits rrp6 and dis3 in cytoplasmic- and nuclear-specific RNA exosome complex forms. Exo-9 is formed by a hexameric base ring of RNase PH domain-containing subunits and a cap ring consisting of csl4, rrp4 and rrp40.

It is found in the cytoplasm. The protein resides in the nucleus. It localises to the nucleolus. Its function is as follows. Non-catalytic component of the RNA exosome complex which has 3'-&gt;5' exoribonuclease activity and participates in a multitude of cellular RNA processing and degradation events. In the nucleus, the RNA exosome complex is involved in proper maturation of stable RNA species such as rRNA, snRNA and snoRNA, in the elimination of RNA processing by-products and non-coding 'pervasive' transcripts, such as antisense RNA species and cryptic unstable transcripts (CUTs), and of mRNAs with processing defects, thereby limiting or excluding their export to the cytoplasm. In the cytoplasm, the RNA exosome complex is involved in general mRNA turnover and in RNA surveillance pathways, preventing translation of aberrant mRNAs. The catalytic inactive RNA exosome core complex of 9 subunits (Exo-9) is proposed to play a pivotal role in the binding and presentation of RNA for ribonucleolysis, and to serve as a scaffold for the association with catalytic subunits and accessory proteins or complexes. ski6 is part of the hexameric ring of RNase PH domain-containing subunits proposed to form a central channel which threads RNA substrates for degradation. This chain is Exosome complex component rrp42 (rrp42), found in Schizosaccharomyces pombe (strain 972 / ATCC 24843) (Fission yeast).